The sequence spans 244 residues: Na(+)-translocating NADH-quinone reductase subunit E (244 aa).

6 helical membrane-spanning segments follow: residues 11 to 31 (LLGI…TFLG), 47 to 67 (GLGM…WLIH), 90 to 110 (FLEL…LELL), 123 to 143 (GIFL…LFGI), 153 to 173 (VVFS…FATI), and 189 to 209 (MGIS…LTGI).

Belongs to the NqrDE/RnfAE family. In terms of assembly, composed of six subunits; NqrA, NqrB, NqrC, NqrD, NqrE and NqrF.

The protein resides in the cell inner membrane. The enzyme catalyses a ubiquinone + n Na(+)(in) + NADH + H(+) = a ubiquinol + n Na(+)(out) + NAD(+). Functionally, NQR complex catalyzes the reduction of ubiquinone-1 to ubiquinol by two successive reactions, coupled with the transport of Na(+) ions from the cytoplasm to the periplasm. NqrA to NqrE are probably involved in the second step, the conversion of ubisemiquinone to ubiquinol. This Chlamydia muridarum (strain MoPn / Nigg) protein is Na(+)-translocating NADH-quinone reductase subunit E.